We begin with the raw amino-acid sequence, 247 residues long: UPF0309 protein lin2794 (247 aa).

One can recognise an SIS domain in the interval 31–214 (VAESIENDGV…EKMVNDNFTP (184 aa)).

It belongs to the UPF0309 family.

This chain is UPF0309 protein lin2794, found in Listeria innocua serovar 6a (strain ATCC BAA-680 / CLIP 11262).